The following is a 1035-amino-acid chain: Glycine dehydrogenase (decarboxylating), mitochondrial (1035 aa).

The transit peptide at 1–64 (MERARKLANR…KSFNTQQARS (64 aa)) directs the protein to the mitochondrion. Lys771 bears the N6-(pyridoxal phosphate)lysine mark.

It belongs to the GcvP family. In terms of assembly, homodimer. The glycine cleavage system is composed of four proteins: P, T, L and H. Pyridoxal 5'-phosphate serves as cofactor.

It localises to the mitochondrion. It carries out the reaction N(6)-[(R)-lipoyl]-L-lysyl-[glycine-cleavage complex H protein] + glycine + H(+) = N(6)-[(R)-S(8)-aminomethyldihydrolipoyl]-L-lysyl-[glycine-cleavage complex H protein] + CO2. Functionally, the glycine cleavage system catalyzes the degradation of glycine. The P protein binds the alpha-amino group of glycine through its pyridoxal phosphate cofactor; CO(2) is released and the remaining methylamine moiety is then transferred to the lipoamide cofactor of the H protein. The chain is Glycine dehydrogenase (decarboxylating), mitochondrial (GDCSP) from Solanum tuberosum (Potato).